Here is a 714-residue protein sequence, read N- to C-terminus: Cell wall protein IFF7 (714 aa).

The signal sequence occupies residues 1–19 (MLFTLSILSTLLFSTSISA). N-linked (GlcNAc...) asparagine glycosylation occurs at Asn-200. Residues 320–330 (GPVPSQKSLPS) show a composition bias toward polar residues. 2 disordered regions span residues 320–633 (GPVP…AADS) and 660–692 (PIANESSSPSSSSSSSSSSSGTPGEVIPNANGS). Low complexity predominate over residues 346 to 504 (GSSSSSSVVS…SSTPLSGDSS (159 aa)). Asn-390, Asn-394, Asn-399, Asn-421, and Asn-473 each carry an N-linked (GlcNAc...) asparagine glycan. Residues 505-519 (QVSSLTTGTSPDTIA) are compositionally biased toward polar residues. The segment covering 520–544 (SFQTDSTSFGFGSGSPSSGAVQSSG) has biased composition (low complexity). Positions 545–558 (VTNSTPNTGDVNTQ) are enriched in polar residues. Composition is skewed to low complexity over residues 559–590 (SNTANIATSDNTATSTASNDTGVNTATATTTG) and 597–625 (NNNNNNNNNNNNNNNNNNNNNNNNNNTNN). N-linked (GlcNAc...) asparagine glycosylation is found at Asn-577, Asn-621, Asn-624, and Asn-663. Positions 665–679 (SSSPSSSSSSSSSSS) are enriched in low complexity. Asn-690 carries N-linked (GlcNAc...) asparagine glycosylation. Asn-690 carries GPI-anchor amidated asparagine lipidation. The propeptide at 691-714 (GSSKLSIGMTFMISGFATMFALFM) is removed in mature form.

The protein belongs to the HYR1/IFF family. The GPI-anchor is attached to the protein in the endoplasmic reticulum and serves to target the protein to the cell surface. There, the glucosamine-inositol phospholipid moiety is cleaved off and the GPI-modified mannoprotein is covalently attached via its lipidless GPI glycan remnant to the 1,6-beta-glucan of the outer cell wall layer.

Its subcellular location is the secreted. The protein localises to the cell wall. It localises to the membrane. GPI-anchored cell wall protein involved in cell wall organization, hyphal growth, as well as in host-fungal interaction and virulence. The protein is Cell wall protein IFF7 (IFF8) of Candida albicans (strain SC5314 / ATCC MYA-2876) (Yeast).